The chain runs to 429 residues: Probable M18 family aminopeptidase 2 (429 aa).

Residues H82, H156, and H401 each contribute to the Zn(2+) site.

The protein belongs to the peptidase M18 family. Zn(2+) serves as cofactor.

The chain is Probable M18 family aminopeptidase 2 from Pseudomonas syringae pv. syringae (strain B728a).